Here is a 54-residue protein sequence, read N- to C-terminus: MPGKKARKNAQPSPARAPAELEVECATQLRRFGDKLNFRQKLLNLISKLFCSGT.

Residues 29-37 (LRRFGDKLN) carry the BH3 motif. Positions 41–50 (KLLNLISKLF) are required for mitochondrial location.

It belongs to the PMAIP1 family. Interacts with MCL1. Interacts with BCL2A1. Interacts with BAX. Interacts with BCL2L10. In terms of tissue distribution, highly expressed in adult T-cell leukemia cell line.

Its subcellular location is the mitochondrion. Promotes activation of caspases and apoptosis. Promotes mitochondrial membrane changes and efflux of apoptogenic proteins from the mitochondria. Contributes to p53/TP53-dependent apoptosis after radiation exposure. Promotes proteasomal degradation of MCL1. Competes with BAK1 for binding to MCL1 and can displace BAK1 from its binding site on MCL1. Competes with BIM/BCL2L11 for binding to MCL1 and can displace BIM/BCL2L11 from its binding site on MCL1. The polypeptide is Phorbol-12-myristate-13-acetate-induced protein 1 (PMAIP1) (Homo sapiens (Human)).